Here is a 108-residue protein sequence, read N- to C-terminus: DNA-binding protein HBbu (108 aa).

The protein belongs to the bacterial histone-like protein family.

Functionally, histone-like DNA-binding protein which is capable of wrapping DNA to stabilize it, and thus to prevent its denaturation under extreme environmental conditions. In Borreliella japonica (Borrelia japonica), this protein is DNA-binding protein HBbu (hbb).